Reading from the N-terminus, the 149-residue chain is Non-structural protein 7b (149 aa).

The polypeptide is Non-structural protein 7b (Bat coronavirus HKU9 (BtCoV)).